We begin with the raw amino-acid sequence, 590 residues long: Phenylalanine--tRNA ligase beta subunit (590 aa).

In terms of domain architecture, B5 spans 276 to 382 (MELDVWDVPV…IMYNYDRFEP (107 aa)). Mg(2+)-binding residues include Asn-360, Asp-366, Glu-369, and Asp-370.

The protein belongs to the phenylalanyl-tRNA synthetase beta subunit family. Type 2 subfamily. As to quaternary structure, tetramer of two alpha and two beta subunits. Mg(2+) is required as a cofactor.

Its subcellular location is the cytoplasm. The catalysed reaction is tRNA(Phe) + L-phenylalanine + ATP = L-phenylalanyl-tRNA(Phe) + AMP + diphosphate + H(+). This chain is Phenylalanine--tRNA ligase beta subunit, found in Methanopyrus kandleri (strain AV19 / DSM 6324 / JCM 9639 / NBRC 100938).